Here is a 300-residue protein sequence, read N- to C-terminus: Type II methyltransferase M.XycI (300 aa).

Residues 109–129 are disordered; the sequence is RGYRAPDKKNPARAMDVRPDT. Residues 112–127 show a composition bias toward basic and acidic residues; sequence RAPDKKNPARAMDVRP.

It belongs to the N(4)/N(6)-methyltransferase family. N(4) subfamily.

The catalysed reaction is a 2'-deoxycytidine in DNA + S-adenosyl-L-methionine = an N(4)-methyl-2'-deoxycytidine in DNA + S-adenosyl-L-homocysteine + H(+). In terms of biological role, a beta subtype methylase, recognizes the double-stranded sequence 5'-CCCGGG-3', methylates C-2 on both strands, and protects the DNA from cleavage by the XcyI endonuclease. The polypeptide is Type II methyltransferase M.XycI (xcyIM) (Xanthomonas campestris pv. cyanopsidis).